The following is a 235-amino-acid chain: MLDGRPDSPPITIALAKGALLPEAIQCLQQVGIDFSRFLDPGNRLLRIESPTRLNGQRYEALLVRTHDVPVYVEYGQAQLGIVGYDVLRERYAGTEARVAHLLDLQFGHCRMSVALPQDSPYHSAAQLPAHARVASKFVGCAREYFDRLDLPVELISLYGSVELAPLTGMADAIVDLVATGRTLRENGLIERDCLFESTARLIAHPISYRVNQQPIRELITQIRERWLGSLLVGG.

Belongs to the ATP phosphoribosyltransferase family. Short subfamily. In terms of assembly, heteromultimer composed of HisG and HisZ subunits.

The protein resides in the cytoplasm. The enzyme catalyses 1-(5-phospho-beta-D-ribosyl)-ATP + diphosphate = 5-phospho-alpha-D-ribose 1-diphosphate + ATP. The protein operates within amino-acid biosynthesis; L-histidine biosynthesis; L-histidine from 5-phospho-alpha-D-ribose 1-diphosphate: step 1/9. Functionally, catalyzes the condensation of ATP and 5-phosphoribose 1-diphosphate to form N'-(5'-phosphoribosyl)-ATP (PR-ATP). Has a crucial role in the pathway because the rate of histidine biosynthesis seems to be controlled primarily by regulation of HisG enzymatic activity. This Synechococcus sp. (strain JA-2-3B'a(2-13)) (Cyanobacteria bacterium Yellowstone B-Prime) protein is ATP phosphoribosyltransferase.